A 335-amino-acid chain; its full sequence is Glyceraldehyde-3-phosphate dehydrogenase (335 aa).

NAD(+) is bound by residues 10-11 (RI), aspartate 33, arginine 77, and serine 119. D-glyceraldehyde 3-phosphate is bound by residues 150–152 (SCT), threonine 181, 210–211 (TG), and arginine 233. Catalysis depends on cysteine 151, which acts as the Nucleophile. Residue asparagine 315 participates in NAD(+) binding.

This sequence belongs to the glyceraldehyde-3-phosphate dehydrogenase family. Homotetramer.

The protein resides in the cytoplasm. The catalysed reaction is D-glyceraldehyde 3-phosphate + phosphate + NAD(+) = (2R)-3-phospho-glyceroyl phosphate + NADH + H(+). It participates in carbohydrate degradation; glycolysis; pyruvate from D-glyceraldehyde 3-phosphate: step 1/5. Its function is as follows. Catalyzes the oxidative phosphorylation of glyceraldehyde 3-phosphate (G3P) to 1,3-bisphosphoglycerate (BPG) using the cofactor NAD. The first reaction step involves the formation of a hemiacetal intermediate between G3P and a cysteine residue, and this hemiacetal intermediate is then oxidized to a thioester, with concomitant reduction of NAD to NADH. The reduced NADH is then exchanged with the second NAD, and the thioester is attacked by a nucleophilic inorganic phosphate to produce BPG. In Chlamydia pneumoniae (Chlamydophila pneumoniae), this protein is Glyceraldehyde-3-phosphate dehydrogenase (gap).